Consider the following 64-residue polypeptide: Large ribosomal subunit protein bL33 (64 aa).

This sequence belongs to the bacterial ribosomal protein bL33 family.

This chain is Large ribosomal subunit protein bL33, found in Parasynechococcus marenigrum (strain WH8102).